The chain runs to 104 residues: L-rhamnose mutarotase (104 aa).

Substrate is bound at residue Tyr18. The active-site Proton donor is His22. Residues Tyr41 and 76–77 each bind substrate; that span reads WW.

This sequence belongs to the rhamnose mutarotase family. As to quaternary structure, homodimer.

It is found in the cytoplasm. It catalyses the reaction alpha-L-rhamnose = beta-L-rhamnose. Its pathway is carbohydrate metabolism; L-rhamnose metabolism. Functionally, involved in the anomeric conversion of L-rhamnose. The chain is L-rhamnose mutarotase from Oceanobacillus iheyensis (strain DSM 14371 / CIP 107618 / JCM 11309 / KCTC 3954 / HTE831).